The chain runs to 80 residues: Exodeoxyribonuclease 7 small subunit (80 aa).

This sequence belongs to the XseB family. In terms of assembly, heterooligomer composed of large and small subunits.

It localises to the cytoplasm. The catalysed reaction is Exonucleolytic cleavage in either 5'- to 3'- or 3'- to 5'-direction to yield nucleoside 5'-phosphates.. Bidirectionally degrades single-stranded DNA into large acid-insoluble oligonucleotides, which are then degraded further into small acid-soluble oligonucleotides. This chain is Exodeoxyribonuclease 7 small subunit, found in Rickettsia massiliae (strain Mtu5).